The sequence spans 414 residues: METRNRTIHLTDAIWTEILARLPLRIIARFKSVSKTWKSTIESVYFRRLFVSVHRKSSTSWSLMWYGQKDLVGFHGCETWGLPKSLSFYIPSSLCIIEGSSHGLVLISENDDDCCFVGNPVLQQWIKIPPPPVHSSVFGLVSRVDDDGFVLGFKVVKLAEVIVTNNYVSCSLSVFVYSSETGIWTCKTIHCPYQITNFGSFTLDGTIYFDHLSEPGVLVAYDFYSEISDQFWVIPLPDHPNHGFNSDFKGALTTSQGFVMYIRTLAQSSSNVFKAWRLNNDSTWQLLWKIGLPSLIGDYVPMAMHPFDSDIVHLWSQDHRHVVSWNLRTQKNRILGAEDNDEDHKDCYLNQPVCEECMDEICGCKASVRLLQLVLPRWMESVPCPPQVEMMNTASVISYVTSMQETMIRNWLHQ.

The region spanning Asn-5–Ser-52 is the F-box domain.

The sequence is that of F-box protein At3g26010 from Arabidopsis thaliana (Mouse-ear cress).